The sequence spans 635 residues: MVSIRLPDGSVRQYEHPVTVAEVAASIGPGLAKAALGGKLDGELVDTSAVIDHDASLAIVTDKDPDGLDIIRHSTAHLLAYAVKELYPDAQVTIGPVIDNGFYYDFAYHRPFTPEDLEKIEKRMQELAKKDEPVTRRVVSRDEAAGYFRSIGEKYKAEIIESIPESDEIKLYSHGGFTDLCRGPHVPSTGKLKVFKLMKVAGAYWRGDSKNEQLQRIYGTAWTKKEDQDQYLHMLEEAEKRDHRKLGKQLDLFHMQEESPGMVFWHPKGWALWQQVEQYMRRRVNEAGYLEIKTPMIMDRSLWEASGHWQNYRENMFTTESEKRDYAIKPMNCPGHVQVFKHGLRSYRDLPLRYAEFGSCHRNEASGALHGLMRVRGFVQDDAHIFCTEEQIIAESIAFNKLAMSVYRDFGFDHIDIKLSLRPEQRMGSDETWDRAEQGLREALTACGLQWEELPGEGAFYGPKIEYHIKDALGRSWQCGTLQLDMMLPERLGAEYVAEDNSRRRPVMLHRAIVGSMERFLGILIEHHAGAMPVWLAPVQAVVLNIAESQVEYAQSLAQTLQKQGLRVTADLRNEKISYKIREHTLEKVPYLLVVGDKERDAQTVAVRARGGVDLGVMPVEAFVERLQEDLRSFK.

Positions 1-61 (MVSIRLPDGS…DHDASLAIVT (61 aa)) constitute a TGS domain. Residues 242–533 (DHRKLGKQLD…LIEHHAGAMP (292 aa)) are catalytic. Zn(2+)-binding residues include C333, H384, and H510.

The protein belongs to the class-II aminoacyl-tRNA synthetase family. In terms of assembly, homodimer. The cofactor is Zn(2+).

The protein localises to the cytoplasm. The catalysed reaction is tRNA(Thr) + L-threonine + ATP = L-threonyl-tRNA(Thr) + AMP + diphosphate + H(+). In terms of biological role, catalyzes the attachment of threonine to tRNA(Thr) in a two-step reaction: L-threonine is first activated by ATP to form Thr-AMP and then transferred to the acceptor end of tRNA(Thr). Also edits incorrectly charged L-seryl-tRNA(Thr). This chain is Threonine--tRNA ligase, found in Burkholderia multivorans (strain ATCC 17616 / 249).